Reading from the N-terminus, the 168-residue chain is HTH-type transcriptional regulator IscR (168 aa).

The HTH rrf2-type domain occupies Lys2–Lys131. A DNA-binding region (H-T-H motif) is located at residues Leu28–Lys51. [2Fe-2S] cluster is bound by residues Cys92, Cys98, and Cys104.

[2Fe-2S] cluster is required as a cofactor.

In terms of biological role, regulates the transcription of several operons and genes involved in the biogenesis of Fe-S clusters and Fe-S-containing proteins. This is HTH-type transcriptional regulator IscR from Vibrio campbellii (strain ATCC BAA-1116).